Reading from the N-terminus, the 792-residue chain is Ribonucleoside-diphosphate reductase large subunit (792 aa).

The region spanning 1–92 (MHVIKRDGRQ…VSNLHKETKK (92 aa)) is the ATP-cone domain. Residues 5–6 (KR), 11–17 (ERVMFDK), Thr-53, and Asp-57 contribute to the ATP site. Lys-17 bears the N6-acetyllysine mark. GDP is bound by residues Ser-202 and Ser-217. The cysteines at positions 218 and 444 are disulfide-linked. Residues 226–228 (DSI), Lys-243, Arg-256, and 263–264 (AG) contribute to the dTTP site. Lys-376 bears the N6-acetyllysine mark. Asn-427 contributes to the GDP binding site. Asn-427 acts as the Proton acceptor in catalysis. Catalysis depends on Cys-429, which acts as the Cysteine radical intermediate. GDP-binding positions include Glu-431 and 604–607 (TAST). Glu-431 (proton acceptor) is an active-site residue. A Phosphothreonine modification is found at Thr-751.

This sequence belongs to the ribonucleoside diphosphate reductase large chain family. In terms of assembly, heterodimer of a large and a small subunit. Interacts with RRM2B. Interacts with AHCYL1 which inhibits its activity.

It localises to the cytoplasm. The catalysed reaction is a 2'-deoxyribonucleoside 5'-diphosphate + [thioredoxin]-disulfide + H2O = a ribonucleoside 5'-diphosphate + [thioredoxin]-dithiol. With respect to regulation, under complex allosteric control mediated by deoxynucleoside triphosphates and ATP binding to separate specificity and activation sites on the M1 subunit. The type of nucleotide bound at the specificity site determines substrate preference. It seems probable that ATP makes the enzyme reduce CDP and UDP, dGTP favors ADP reduction and dTTP favors GDP reduction. Stimulated by ATP and inhibited by dATP binding to the activity site, the dATP inhibition is mediated by AHCYL1 which stabilizes dATP in the site. Functionally, provides the precursors necessary for DNA synthesis. Catalyzes the biosynthesis of deoxyribonucleotides from the corresponding ribonucleotides. The sequence is that of Ribonucleoside-diphosphate reductase large subunit (Rrm1) from Mus musculus (Mouse).